We begin with the raw amino-acid sequence, 233 residues long: Germin-like protein (233 aa).

The first 22 residues, 1-22, serve as a signal peptide directing secretion; the sequence is MEAYKMFAFVVLLATTLYQAYA. Cysteines 32 and 49 form a disulfide. Positions 63–215 constitute a Cupin type-1 domain; it reads RGLNMPANTD…RPSISMRIWS (153 aa). Histidine 111, histidine 113, glutamate 118, and histidine 162 together coordinate Mn(2+).

This sequence belongs to the germin family. In terms of assembly, oligomer (believed to be a pentamer but probably hexamer). As to expression, expressed at high levels in unstressed roots.

It is found in the secreted. The protein localises to the extracellular space. It localises to the apoplast. May be involved in seed germination. The polypeptide is Germin-like protein (Mesembryanthemum crystallinum (Common ice plant)).